Here is a 920-residue protein sequence, read N- to C-terminus: Probable transport protein MmpL7 (920 aa).

12 consecutive transmembrane segments (helical) span residues 44 to 64, 210 to 230, 241 to 261, 271 to 291, 311 to 331, 344 to 364, 389 to 409, 761 to 781, 790 to 810, 822 to 842, 864 to 884, and 888 to 908; these read LLVV…LTFT, ITAW…VLLL, AIVL…AAVV, VFSW…ATML, LPAF…LLLA, LGVF…IALA, SASA…IIGM, LIHD…LASM, AVGV…IALW, VPLV…VAGI, GAVA…VLVS, and FSVL…LITV.

Belongs to the resistance-nodulation-cell division (RND) (TC 2.A.6) family. MmpL subfamily.

Its subcellular location is the cell membrane. This is Probable transport protein MmpL7 (mmpL7) from Mycobacterium bovis (strain ATCC BAA-935 / AF2122/97).